The chain runs to 212 residues: Thymidylate kinase (212 aa).

9–16 (GIDGCGKT) contacts ATP.

It belongs to the thymidylate kinase family.

The enzyme catalyses dTMP + ATP = dTDP + ADP. In terms of biological role, phosphorylation of dTMP to form dTDP in both de novo and salvage pathways of dTTP synthesis. This chain is Thymidylate kinase, found in Synechococcus sp. (strain CC9311).